The chain runs to 314 residues: Olfactory receptor 9A4 (314 aa).

Residues 1–24 (MLMNYSSATEFYLLGFPGSEELHH) lie on the Extracellular side of the membrane. An N-linked (GlcNAc...) asparagine glycan is attached at Asn4. A helical transmembrane segment spans residues 25–45 (ILFAIFFFFYLVTLMGNTVII). Topologically, residues 46 to 53 (MIVCVDKR) are cytoplasmic. The helical transmembrane segment at 54–74 (LQSPMYFFLGHLSALEILVTT) threads the bilayer. Residues 75 to 99 (IIVPVMLWGLLLPGMQTIYLSACVV) are Extracellular-facing. Cys97 and Cys189 are disulfide-bonded. The helical transmembrane segment at 100 to 120 (QLFLYLAVGTTEFALLGAMAV) threads the bilayer. Topologically, residues 121 to 139 (DRYVAVCNPLRYNIIMNRH) are cytoplasmic. The helical transmembrane segment at 140 to 160 (TCNFVVLVSWVFGFLFQIWPV) threads the bilayer. The Extracellular portion of the chain corresponds to 161–197 (YVMFQLTYCKSNVVNNFFCDRGQLLKLSCNNTLFTEF). Asn190 carries N-linked (GlcNAc...) asparagine glycosylation. The chain crosses the membrane as a helical span at residues 198 to 217 (ILFLMAVFVLFGSLIPTIVS). Topologically, residues 218–237 (NAYIISTILKIPSSSGRRKS) are cytoplasmic. A helical membrane pass occupies residues 238-258 (FSTCASHFTCVVIGYGSCLFL). Residues 259-271 (YVKPKQTQAADYN) are Extracellular-facing. Residues 272-292 (WVVSLMVSVVTPFLNPFIFTL) form a helical membrane-spanning segment. At 293–314 (RNDKVIEALRDGVKRCCQLFRN) the chain is on the cytoplasmic side.

It belongs to the G-protein coupled receptor 1 family.

It localises to the cell membrane. Odorant receptor. The protein is Olfactory receptor 9A4 (OR9A4) of Homo sapiens (Human).